The sequence spans 579 residues: Multidrug resistance-like ATP-binding protein MdlA (579 aa).

The ABC transmembrane type-1 domain maps to 18-303 (YTIAIFLLIS…FAWMFNIIER (286 aa)). 6 helical membrane-spanning segments follow: residues 20–40 (IAIF…KLIG), 53–73 (KAPI…IYIL), 134–154 (GVLT…VMIT), 155–175 (QISW…AIII), 247–267 (IIHL…SYMI), and 281–301 (ILYL…FNII). In terms of domain architecture, ABC transporter spans 338–572 (VKINYFKYSK…LKQWYGKTYL (235 aa)). Residue 370–377 (GPTGSGKS) participates in ATP binding.

Belongs to the ABC transporter superfamily. Drug exporter-2 (TC 3.A.1.117) family.

The protein localises to the cell membrane. It catalyses the reaction ATP + H2O + xenobioticSide 1 = ADP + phosphate + xenobioticSide 2.. This is Multidrug resistance-like ATP-binding protein MdlA (mdlA) from Buchnera aphidicola subsp. Baizongia pistaciae (strain Bp).